We begin with the raw amino-acid sequence, 309 residues long: uncharacterized protein (309 aa).

Residues 1–32 (MTGTAPVSRRQYLGTAGAIIGTTAGCLTGADA) constitute a signal peptide (tat-type signal).

Belongs to the bacterial solute-binding protein 1 family. WtpA subfamily. In terms of processing, predicted to be exported by the Tat system. The position of the signal peptide cleavage has not been experimentally proven.

This is an uncharacterized protein from Halobacterium salinarum (strain ATCC 700922 / JCM 11081 / NRC-1) (Halobacterium halobium).